Consider the following 601-residue polypeptide: DNA topoisomerase I, mitochondrial (601 aa).

The transit peptide at 1–50 (MRVVRLLRLRAALTLLGEVPRRPASRGVPGSRRTQKGSGARWEKEKHEDG) directs the protein to the mitochondrion. The tract at residues 22 to 48 (RPASRGVPGSRRTQKGSGARWEKEKHE) is disordered. Interaction with DNA stretches follow at residues 261-262 (KY), 324-329 (RAGNEK), and 421-423 (TAK). Positions 268-601 (CSKLKGETAW…LAMAGEDFEF (334 aa)) constitute a Topo IB-type catalytic domain. The active-site O-(3'-phospho-DNA)-tyrosine intermediate is Tyr559.

It belongs to the type IB topoisomerase family. The cofactor is Ca(2+). It depends on Mg(2+) as a cofactor.

Its subcellular location is the mitochondrion. It catalyses the reaction ATP-independent breakage of single-stranded DNA, followed by passage and rejoining.. Releases the supercoiling and torsional tension of DNA introduced during duplication of mitochondrial DNA by transiently cleaving and rejoining one strand of the DNA duplex. Introduces a single-strand break via transesterification at a target site in duplex DNA. The scissile phosphodiester is attacked by the catalytic tyrosine of the enzyme, resulting in the formation of a DNA-(3'-phosphotyrosyl)-enzyme intermediate and the expulsion of a 5'-OH DNA strand. The free DNA strand then rotates around the intact phosphodiester bond on the opposing strand, thus removing DNA supercoils. Finally, in the religation step, the DNA 5'-OH attacks the covalent intermediate to expel the active-site tyrosine and restore the DNA phosphodiester backbone. This chain is DNA topoisomerase I, mitochondrial (TOP1MT), found in Pan troglodytes (Chimpanzee).